A 535-amino-acid chain; its full sequence is CTP synthase (535 aa).

Residues 1–267 are amidoligase domain; that stretch reads MTKYIFVTGG…DKLVCDHMKL (267 aa). Ser13 is a CTP binding site. Residue Ser13 participates in UTP binding. 14 to 19 lines the ATP pocket; that stretch reads SLGKGI. Residue Tyr54 coordinates L-glutamine. Residue Asp71 coordinates ATP. Mg(2+) contacts are provided by Asp71 and Glu141. Residues 148–150, 188–193, and Lys224 each bind CTP; these read DIE and KTKPTQ. UTP-binding positions include 188-193 and Lys224; that span reads KTKPTQ. Residues 292-534 form the Glutamine amidotransferase type-1 domain; sequence TISLVGKYVE…IGASVQAAEQ (243 aa). Gly354 is an L-glutamine binding site. Catalysis depends on Cys381, which acts as the Nucleophile; for glutamine hydrolysis. Residues 382–385, Glu405, and Arg462 contribute to the L-glutamine site; that span reads LGMQ. Active-site residues include His507 and Glu509.

This sequence belongs to the CTP synthase family. Homotetramer.

The enzyme catalyses UTP + L-glutamine + ATP + H2O = CTP + L-glutamate + ADP + phosphate + 2 H(+). It carries out the reaction L-glutamine + H2O = L-glutamate + NH4(+). The catalysed reaction is UTP + NH4(+) + ATP = CTP + ADP + phosphate + 2 H(+). It functions in the pathway pyrimidine metabolism; CTP biosynthesis via de novo pathway; CTP from UDP: step 2/2. Allosterically activated by GTP, when glutamine is the substrate; GTP has no effect on the reaction when ammonia is the substrate. The allosteric effector GTP functions by stabilizing the protein conformation that binds the tetrahedral intermediate(s) formed during glutamine hydrolysis. Inhibited by the product CTP, via allosteric rather than competitive inhibition. Its function is as follows. Catalyzes the ATP-dependent amination of UTP to CTP with either L-glutamine or ammonia as the source of nitrogen. Regulates intracellular CTP levels through interactions with the four ribonucleotide triphosphates. This Bacillus velezensis (strain DSM 23117 / BGSC 10A6 / LMG 26770 / FZB42) (Bacillus amyloliquefaciens subsp. plantarum) protein is CTP synthase.